Here is a 234-residue protein sequence, read N- to C-terminus: Sugar fermentation stimulation protein homolog (234 aa).

This sequence belongs to the SfsA family.

The protein is Sugar fermentation stimulation protein homolog of Shewanella baltica (strain OS155 / ATCC BAA-1091).